The following is a 200-amino-acid chain: V-set and transmembrane domain-containing protein 5 (200 aa).

An N-terminal signal peptide occupies residues 1-28; that stretch reads MRPLPSGRRKTRGISLGLFALCLAAARC. Residues 29 to 147 are Extracellular-facing; the sequence is LQSQGVSLYI…VSEILYEDLH (119 aa). The 103-residue stretch at 37-139 folds into the Ig-like C2-type domain; the sequence is YIPQATINAT…QFGTIVLHVS (103 aa). N-linked (GlcNAc...) asparagine glycosylation occurs at asparagine 102. Residues 148–168 form a helical membrane-spanning segment; it reads FVAVILAFLAAVAAVLISLMW. Residues 169-200 lie on the Cytoplasmic side of the membrane; it reads VCNKCAYKFQRKRRHKLKESTTEEIELEDVEC. Residues 170–186 form an important for CDC42-dependent filopodia induction region; sequence CNKCAYKFQRKRRHKLK.

Can homooligomerize through cis interactions within the same cell membrane. N-glycosylated.

It is found in the cell membrane. Its subcellular location is the cell projection. It localises to the dendrite. The protein resides in the axon. Cell adhesion-like membrane protein of the central nervous system (CNS) which modulates both the position and complexity of central neurons by altering their membrane morphology and dynamics. Involved in the formation of neuronal dendrites and protrusions including dendritic filopodia. In synaptogenesis, regulates synapse formation by altering dendritic spine morphology and actin distribution. Promotes formation of unstable neuronal spines such as thin and branched types. Regulates neuronal morphogenesis and migration during cortical development in the brain. In Homo sapiens (Human), this protein is V-set and transmembrane domain-containing protein 5 (VSTM5).